The primary structure comprises 303 residues: Taste receptor type 2 member 2 (303 aa).

The Extracellular segment spans residues 1–10; that stretch reads MALSFSAILH. Residues 11–31 traverse the membrane as a helical segment; sequence IIMMSAEFFTGITVNGFLIIV. At 32–56 the chain is on the cytoplasmic side; the sequence is NCNELIKHRKLMPIQILLMCIGMSR. The helical transmembrane segment at 57–77 threads the bilayer; sequence FGLQMVLMVQSFFSVFFPLLY. At 78–79 the chain is on the extracellular side; that stretch reads VK. A helical transmembrane segment spans residues 80–100; the sequence is IIYGAAMMFLWMFFSSISLWF. Residues 101–102 lie on the Cytoplasmic side of the membrane; that stretch reads AT. Residues 103-123 traverse the membrane as a helical segment; that stretch reads CLSVFYCLKISGFTQSCFLWL. The Extracellular segment spans residues 124–129; the sequence is KFRIPK. Residues 130–150 traverse the membrane as a helical segment; that stretch reads LIPWLLLGSVLASVSIASVCI. Over 151–185 the chain is Cytoplasmic; the sequence is EVDYAKNVEEDALRNTTLKKSKTKIKKISEVLLVN. A helical transmembrane segment spans residues 186-206; it reads LALIFPLAIFVMCTSMLLISL. Topologically, residues 207-234 are extracellular; it reads YKHTHRMQHGSHGFRNANTEAHINALKT. The helical transmembrane segment at 235 to 255 threads the bilayer; it reads VITFFCFFISYFAAFMTNMTF. The Cytoplasmic portion of the chain corresponds to 256-277; sequence SLPYRSHQFFMLKDIMAAYPSG.

The protein belongs to the G-protein coupled receptor T2R family.

The protein resides in the cell membrane. Bitter taste receptor that detects natural and synthetic bitter compounds. This is Taste receptor type 2 member 2 from Homo sapiens (Human).